Reading from the N-terminus, the 796-residue chain is DnaJ homolog subfamily C member 10 (796 aa).

Positions 1–33 (MKHSLNTATSSSSVLKRTILYLVLISLAALVYC) are cleaved as a signal peptide. One can recognise a J domain in the interval 36-100 (DYYDLLGVSK…DLRKKYDKYG (65 aa)). Residues 131-233 (EIITLDRGEF…ERLVNFAMPY (103 aa)) enclose the Thioredoxin 1 domain. A disulfide bridge links Cys159 with Cys162. Trxb stretches follow at residues 236–351 (STVT…LPDL) and 349–464 (PDLE…PTNF). 3 Thioredoxin domains span residues 455-554 (HVIT…IEDL), 558-668 (SVVT…ALMY), and 672-780 (ASFD…ITKR). Cys481 and Cys484 form a disulfide bridge. A glycan (N-linked (GlcNAc...) asparagine) is linked at Asn531. Cystine bridges form between Cys589-Cys592 and Cys701-Cys704. Asn753 is a glycosylation site (N-linked (GlcNAc...) asparagine). Residues 793-796 (KDEL) carry the Prevents secretion from ER motif.

It is found in the endoplasmic reticulum lumen. Endoplasmic reticulum disulfide reductase involved both in the correct folding of proteins and degradation of misfolded proteins. Required for efficient folding of proteins in the endoplasmic reticulum by catalyzing the removal of non-native disulfide bonds formed during the folding of proteins. Also involved in endoplasmic reticulum-associated degradation (ERAD) by reducing incorrect disulfide bonds in misfolded glycoproteins. The polypeptide is DnaJ homolog subfamily C member 10 (dnajc10) (Xenopus laevis (African clawed frog)).